The primary structure comprises 237 residues: uncharacterized protein (237 aa).

Positions 119-237 constitute an N-acetyltransferase domain; it reads VTVRRLTPTD…PAGLDGGLPA (119 aa).

This is an uncharacterized protein from Streptomyces virginiae (Streptomyces cinnamonensis).